Here is a 249-residue protein sequence, read N- to C-terminus: Esterase YjfP (249 aa).

Its function is as follows. Displays esterase activity toward palmitoyl-CoA and pNP-butyrate. In Escherichia coli (strain K12), this protein is Esterase YjfP (yjfP).